We begin with the raw amino-acid sequence, 70 residues long: Protein SlyX homolog (70 aa).

The protein belongs to the SlyX family.

The chain is Protein SlyX homolog from Shewanella pealeana (strain ATCC 700345 / ANG-SQ1).